A 273-amino-acid chain; its full sequence is NADPH-dependent 7-cyano-7-deazaguanine reductase (273 aa).

80–82 (VES) lines the substrate pocket. NADPH is bound at residue 82 to 83 (SK). The active-site Thioimide intermediate is the Cys-180. The active-site Proton donor is Asp-187. 219–220 (HE) contacts substrate. 248-249 (RG) serves as a coordination point for NADPH.

It belongs to the GTP cyclohydrolase I family. QueF type 2 subfamily. In terms of assembly, homodimer.

The protein resides in the cytoplasm. It carries out the reaction 7-aminomethyl-7-carbaguanine + 2 NADP(+) = 7-cyano-7-deazaguanine + 2 NADPH + 3 H(+). Its pathway is tRNA modification; tRNA-queuosine biosynthesis. Catalyzes the NADPH-dependent reduction of 7-cyano-7-deazaguanine (preQ0) to 7-aminomethyl-7-deazaguanine (preQ1). This chain is NADPH-dependent 7-cyano-7-deazaguanine reductase, found in Bordetella bronchiseptica (strain ATCC BAA-588 / NCTC 13252 / RB50) (Alcaligenes bronchisepticus).